A 318-amino-acid polypeptide reads, in one-letter code: tRNA U34 carboxymethyltransferase (318 aa).

The carboxy-S-adenosyl-L-methionine site is built by lysine 88, tryptophan 102, lysine 107, glycine 126, methionine 192, tyrosine 196, and arginine 311.

Belongs to the class I-like SAM-binding methyltransferase superfamily. CmoB family. In terms of assembly, homotetramer.

The enzyme catalyses carboxy-S-adenosyl-L-methionine + 5-hydroxyuridine(34) in tRNA = 5-carboxymethoxyuridine(34) in tRNA + S-adenosyl-L-homocysteine + H(+). Catalyzes carboxymethyl transfer from carboxy-S-adenosyl-L-methionine (Cx-SAM) to 5-hydroxyuridine (ho5U) to form 5-carboxymethoxyuridine (cmo5U) at position 34 in tRNAs. The polypeptide is tRNA U34 carboxymethyltransferase (Pseudomonas fluorescens (strain ATCC BAA-477 / NRRL B-23932 / Pf-5)).